The primary structure comprises 364 residues: Protein Bop (364 aa).

A disordered region spans residues 66 to 88 (STASGTCGGKPAERGPLAGHMPS). The short motif at 114–128 (LDRFLAQLGDYMSFH) is the BH3 element. The segment at 258 to 364 (QLTKESTPGP…PGEPPLSPGF (107 aa)) is disordered. Composition is skewed to pro residues over residues 311–322 (AQRPDPAHPGGP) and 355–364 (PGEPPLSPGF).

In terms of assembly, interacts (via BH3 domain) with VDAC1. Interacts with pro-survival Bcl-2 family members, BCL2, BCL2L1 isoform Bcl-X(L), MCL1, BCL2A1 and BCL2L2. Interacts with BAX and BAK1. In terms of tissue distribution, ubiquitously expressed.

Its subcellular location is the mitochondrion. Could induce apoptosis in a BH3 domain-dependent manner. The direct interaction network of Bcl-2 family members may play a key role in modulation RTL10/BOP intrinsic apoptotic signaling activity. The sequence is that of Protein Bop from Homo sapiens (Human).